A 616-amino-acid chain; its full sequence is MIENKIEQNCALHTNKNLEFLCLDCKLIPCCTLCISRGGEHHRHGIDSLESIQTSSILSMMNSFKDVYPKVIERIENDQQILKDSDEIFNEIQSQYNKNKITLNQEFKKIHNILSILELDIERQLTTDFEINTLINTTITSSINNDIDNYNKNKNNNSITDILNISIKNIQQYNDDDYYKIDSNSIELIKQYQQSLLLLNNNNNIDNLNKLKEYNNQTIKFDNQIINDIRSNLKLIYSFENNNNNNNNNNNNNNNNNNNNNNNNNNNNNKKTEKLNIEIDENNFKFIKKQNKKYYIYSENNEFPKNEERIAFGEGCGSLLKVNWNKNLKNVMLLDGFEESLEPGILPDGIVHLEIFDIKTELAVGSIPSTVTSLTFNDGFNQSIEVGIIPSSVIYLDLHDIKQPLKIGSIPQSVQDLKLCNGFSQPLEPGIITNKIKTLSIHEIKTQLQIGSIPNSVTHMVFYDGFNQLLSAGIIPEGVSWLFFFNIKIPLVVGSIPQSIYYLVFSDGFNQTISPGIITNGVEILCLRDIKQPLEVNSIPKSVTNLLIDSGFQQPLTPGIIPNSIKELALGNIKTQLVEGSIPKKIQKIILDKNFNQSLEICDLDKSVEIRTNYLK.

Residues 239–274 (FENNNNNNNNNNNNNNNNNNNNNNNNNNNNNKKTEK) are a coiled coil. A compositionally biased stretch (low complexity) spans 241–269 (NNNNNNNNNNNNNNNNNNNNNNNNNNNNN). The segment at 241-270 (NNNNNNNNNNNNNNNNNNNNNNNNNNNNNK) is disordered. 6 FNIP repeats span residues 337–379 (FEES…FNDG), 380–421 (FNQS…KLCN), 423–464 (FSQP…VFYD), 466–508 (FNQL…FSDG), 509–550 (FNQT…LIDS), and 552–593 (FQQP…ILDK).

The protein is FNIP repeat-containing protein DDB_G0290639 of Dictyostelium discoideum (Social amoeba).